A 164-amino-acid chain; its full sequence is Zinc finger protein ZAT8 (164 aa).

2 C2H2-type zinc fingers span residues 37-59 (FRCKTCLKEFSSFQALGGHRASH) and 85-107 (HPCPICGVEFPMGQALGGHMRRH).

It is found in the nucleus. Functionally, probable transcription factor that may be involved in stress responses. This chain is Zinc finger protein ZAT8 (ZAT8), found in Arabidopsis thaliana (Mouse-ear cress).